Consider the following 158-residue polypeptide: MAIFEGSFTNASTLKVGIVIARFNDLITNKILSGCLDCLKRHGLDTSELSNQVDIVWVPGSFELPIAAKTLMKKKSYDVVIALGAVIRGETSHYDVVISEASKGISQVSNENNIPIIFGVLTTDTMQQALERAGIKNNLGWNYALQAIEMGSLIKNLN.

5-amino-6-(D-ribitylamino)uracil is bound by residues F23, 61–63, and 85–87; these read SFE and AVI. 90 to 91 lines the (2S)-2-hydroxy-3-oxobutyl phosphate pocket; it reads ET. Catalysis depends on H93, which acts as the Proton donor. F118 is a 5-amino-6-(D-ribitylamino)uracil binding site. R132 contributes to the (2S)-2-hydroxy-3-oxobutyl phosphate binding site.

Belongs to the DMRL synthase family.

It catalyses the reaction (2S)-2-hydroxy-3-oxobutyl phosphate + 5-amino-6-(D-ribitylamino)uracil = 6,7-dimethyl-8-(1-D-ribityl)lumazine + phosphate + 2 H2O + H(+). It functions in the pathway cofactor biosynthesis; riboflavin biosynthesis; riboflavin from 2-hydroxy-3-oxobutyl phosphate and 5-amino-6-(D-ribitylamino)uracil: step 1/2. In terms of biological role, catalyzes the formation of 6,7-dimethyl-8-ribityllumazine by condensation of 5-amino-6-(D-ribitylamino)uracil with 3,4-dihydroxy-2-butanone 4-phosphate. This is the penultimate step in the biosynthesis of riboflavin. The sequence is that of 6,7-dimethyl-8-ribityllumazine synthase from Prochlorococcus marinus (strain MIT 9301).